Reading from the N-terminus, the 334-residue chain is Cysteine and histidine-rich domain-containing protein 1 (334 aa).

Residues cysteine 5, cysteine 10, cysteine 24, histidine 27, cysteine 42, cysteine 43, cysteine 59, histidine 64, cysteine 156, cysteine 161, cysteine 175, histidine 178, cysteine 193, cysteine 194, cysteine 210, and histidine 215 each contribute to the Zn(2+) site. 2 CHORD domains span residues 5 to 64 (CYNR…KGQH) and 156 to 215 (CKNG…KGTH). The region spanning 226–315 (VVPCRHDWHQ…AEFMTWARLE (90 aa)) is the CS domain.

Functionally, regulates centrosome duplication. The polypeptide is Cysteine and histidine-rich domain-containing protein 1 (chordc1) (Xenopus laevis (African clawed frog)).